The following is a 185-amino-acid chain: Ribosome-recycling factor (185 aa).

It belongs to the RRF family.

The protein localises to the cytoplasm. In terms of biological role, responsible for the release of ribosomes from messenger RNA at the termination of protein biosynthesis. May increase the efficiency of translation by recycling ribosomes from one round of translation to another. This Shewanella halifaxensis (strain HAW-EB4) protein is Ribosome-recycling factor.